The primary structure comprises 745 residues: Phosphoribosylformylglycinamidine synthase subunit PurL (745 aa).

H47 is a catalytic residue. The ATP site is built by Y50 and K90. E92 is a Mg(2+) binding site. Substrate is bound by residues 93–96 and R115; that span reads SHNH. Residue H94 is the Proton acceptor of the active site. D116 contacts Mg(2+). Q240 lines the substrate pocket. D268 is a binding site for Mg(2+). 312–314 provides a ligand contact to substrate; that stretch reads ESQ. 2 residues coordinate ATP: N501 and G538. Mg(2+) is bound at residue N539. S541 lines the substrate pocket.

Belongs to the FGAMS family. As to quaternary structure, monomer. Part of the FGAM synthase complex composed of 1 PurL, 1 PurQ and 2 PurS subunits.

It is found in the cytoplasm. The catalysed reaction is N(2)-formyl-N(1)-(5-phospho-beta-D-ribosyl)glycinamide + L-glutamine + ATP + H2O = 2-formamido-N(1)-(5-O-phospho-beta-D-ribosyl)acetamidine + L-glutamate + ADP + phosphate + H(+). It participates in purine metabolism; IMP biosynthesis via de novo pathway; 5-amino-1-(5-phospho-D-ribosyl)imidazole from N(2)-formyl-N(1)-(5-phospho-D-ribosyl)glycinamide: step 1/2. In terms of biological role, part of the phosphoribosylformylglycinamidine synthase complex involved in the purines biosynthetic pathway. Catalyzes the ATP-dependent conversion of formylglycinamide ribonucleotide (FGAR) and glutamine to yield formylglycinamidine ribonucleotide (FGAM) and glutamate. The FGAM synthase complex is composed of three subunits. PurQ produces an ammonia molecule by converting glutamine to glutamate. PurL transfers the ammonia molecule to FGAR to form FGAM in an ATP-dependent manner. PurS interacts with PurQ and PurL and is thought to assist in the transfer of the ammonia molecule from PurQ to PurL. The sequence is that of Phosphoribosylformylglycinamidine synthase subunit PurL from Leptospira borgpetersenii serovar Hardjo-bovis (strain JB197).